We begin with the raw amino-acid sequence, 523 residues long: Vanin-like protein 3 (523 aa).

Positions 1–19 (MAVFLRRFLWLISFTLVLT) are cleaved as a signal peptide. Positions 29 to 298 (YIAGVVEYRP…RKLLLAKVPL (270 aa)) constitute a CN hydrolase domain. The N-linked (GlcNAc...) asparagine glycan is linked to asparagine 64. The active-site Proton acceptor is the glutamate 74. Lysine 167 (proton donor) is an active-site residue. Residues asparagine 177 and asparagine 192 are each glycosylated (N-linked (GlcNAc...) asparagine). Cysteine 200 serves as the catalytic Nucleophile. N-linked (GlcNAc...) asparagine glycans are attached at residues asparagine 330 and asparagine 468. Asparagine 498 carries GPI-anchor amidated asparagine lipidation. Residues 499-523 (GGAGRLGTLLFLLITPLIMMHLFRE) constitute a propeptide, removed in mature form.

It belongs to the carbon-nitrogen hydrolase superfamily. BTD/VNN family. Expressed in third instar larvae.

The protein localises to the cell membrane. This Drosophila melanogaster (Fruit fly) protein is Vanin-like protein 3.